The sequence spans 97 residues: Cobalt transport protein CbiN (97 aa).

2 consecutive transmembrane segments (helical) span residues 6 to 26 and 68 to 88; these read VLMI…YSGL and SLLF…FFGY.

The protein belongs to the CbiN family. In terms of assembly, forms an energy-coupling factor (ECF) transporter complex composed of an ATP-binding protein (A component, CbiO), a transmembrane protein (T component, CbiQ) and 2 possible substrate-capture proteins (S components, CbiM and CbiN) of unknown stoichimetry.

The protein localises to the cell membrane. Its pathway is cofactor biosynthesis; adenosylcobalamin biosynthesis. Its function is as follows. Part of the energy-coupling factor (ECF) transporter complex CbiMNOQ involved in cobalt import. The polypeptide is Cobalt transport protein CbiN (Methanococcus maripaludis (strain C6 / ATCC BAA-1332)).